The chain runs to 253 residues: Protein C1orf43 homolog (253 aa).

Residues 11–31 (VNVVLVMAYGSLVFVLLFIFV) form a helical membrane-spanning segment. The interval 194–213 (SGSSQRQHQSAAKDLTQSPE) is disordered.

It is found in the membrane. The protein localises to the golgi apparatus. The protein resides in the mitochondrion. Functionally, general regulator of phagocytosis. Required to uptake Gram negative bacterium by macrophages. The protein is Protein C1orf43 homolog of Bos taurus (Bovine).